The following is a 555-amino-acid chain: CTP synthase (555 aa).

The amidoligase domain stretch occupies residues M1–L267. S13 contacts CTP. S13 provides a ligand contact to UTP. ATP contacts are provided by residues S14–I19 and D71. Mg(2+)-binding residues include D71 and E141. CTP contacts are provided by residues D148–E150, K188–Q193, and K224. UTP is bound by residues K188–Q193 and K224. A242 provides a ligand contact to ATP. Residues Y299–N535 enclose the Glutamine amidotransferase type-1 domain. G354 contributes to the L-glutamine binding site. The active-site Nucleophile; for glutamine hydrolysis is C381. L-glutamine contacts are provided by residues L382 to Q385, E405, and R463. Residues H508 and E510 contribute to the active site. A disordered region spans residues N536–S555.

It belongs to the CTP synthase family. In terms of assembly, homotetramer.

The catalysed reaction is UTP + L-glutamine + ATP + H2O = CTP + L-glutamate + ADP + phosphate + 2 H(+). It carries out the reaction L-glutamine + H2O = L-glutamate + NH4(+). It catalyses the reaction UTP + NH4(+) + ATP = CTP + ADP + phosphate + 2 H(+). It participates in pyrimidine metabolism; CTP biosynthesis via de novo pathway; CTP from UDP: step 2/2. Allosterically activated by GTP, when glutamine is the substrate; GTP has no effect on the reaction when ammonia is the substrate. The allosteric effector GTP functions by stabilizing the protein conformation that binds the tetrahedral intermediate(s) formed during glutamine hydrolysis. Inhibited by the product CTP, via allosteric rather than competitive inhibition. Functionally, catalyzes the ATP-dependent amination of UTP to CTP with either L-glutamine or ammonia as the source of nitrogen. Regulates intracellular CTP levels through interactions with the four ribonucleotide triphosphates. This chain is CTP synthase, found in Acaryochloris marina (strain MBIC 11017).